Consider the following 181-residue polypeptide: CDP-archaeol synthase (181 aa).

5 helical membrane-spanning segments follow: residues 7 to 27 (VVVA…AVLA), 55 to 75 (AVGT…RPAA), 80 to 100 (GVVL…GAMV), 128 to 148 (FVVV…GDTF), and 150 to 170 (LPVL…TNGI).

The protein belongs to the CDP-archaeol synthase family. It depends on Mg(2+) as a cofactor.

It is found in the cell membrane. It catalyses the reaction 2,3-bis-O-(geranylgeranyl)-sn-glycerol 1-phosphate + CTP + H(+) = CDP-2,3-bis-O-(geranylgeranyl)-sn-glycerol + diphosphate. It participates in membrane lipid metabolism; glycerophospholipid metabolism. Catalyzes the formation of CDP-2,3-bis-(O-geranylgeranyl)-sn-glycerol (CDP-archaeol) from 2,3-bis-(O-geranylgeranyl)-sn-glycerol 1-phosphate (DGGGP) and CTP. This reaction is the third ether-bond-formation step in the biosynthesis of archaeal membrane lipids. The polypeptide is CDP-archaeol synthase (Halobacterium salinarum (strain ATCC 29341 / DSM 671 / R1)).